A 354-amino-acid chain; its full sequence is Rhodopsin (354 aa).

The Extracellular segment spans residues 1–36 (MNGTEGPNFYIPMSNKTGVVRSPFEYPQYYLAEPWK). N-linked (GlcNAc...) asparagine glycosylation is found at asparagine 2 and asparagine 15. The chain crosses the membrane as a helical span at residues 37 to 61 (YSILAAYMFLLILLGFPINFMTLYV). The Cytoplasmic segment spans residues 62-73 (TIQHKKLRTPLN). Residues 74–96 (YILLNLAFANHFMVLCGFTITLY) form a helical membrane-spanning segment. Over 97 to 110 (TSLHGYFVFGQSGC) the chain is Extracellular. A disulfide bond links cysteine 110 and cysteine 187. A helical membrane pass occupies residues 111–133 (YFEGFFATLGGEIALWSLVALAI). Positions 134–136 (ERY) match the 'Ionic lock' involved in activated form stabilization motif. Residues 134 to 152 (ERYIVVCKPMSNFRFGENH) are Cytoplasmic-facing. The helical transmembrane segment at 153–173 (AMMGVAFTWIMALACAVPPLF) threads the bilayer. Over 174–202 (GWSRYIPEGMQCSCGVDYYTLKPEINNES) the chain is Extracellular. A helical membrane pass occupies residues 203-224 (FVIYMFVVHFLIPLIIITFCYG). Residues 225–252 (RLVCTVKEAAAQQQESATTQKAEKEVTR) are Cytoplasmic-facing. The helical transmembrane segment at 253–274 (MVIIMVIFFLICWVPYAYVAFY) threads the bilayer. The Extracellular portion of the chain corresponds to 275–286 (IFCNQGSEFGPI). Residues 287-308 (FMTVPAFFAKSSAIYNPVIYIM) traverse the membrane as a helical segment. N6-(retinylidene)lysine is present on lysine 296. Residues 309 to 354 (LNKQFRNCMITTLCCGKNPFGDDDASSAATSKTEATSVSTSQVSPA) are Cytoplasmic-facing. S-palmitoyl cysteine attachment occurs at residues cysteine 322 and cysteine 323. The segment at 332-354 (DASSAATSKTEATSVSTSQVSPA) is disordered. A compositionally biased stretch (low complexity) spans 334–354 (SSAATSKTEATSVSTSQVSPA).

The protein belongs to the G-protein coupled receptor 1 family. Opsin subfamily. In terms of processing, contains one covalently linked retinal chromophore. Upon light absorption, the covalently bound 11-cis-retinal is converted to all-trans-retinal. After hydrolysis of the Schiff base and release of the covalently bound all-trans-retinal, active rhodopsin is regenerated by binding of a fresh molecule of 11-cis-retinal.

Its subcellular location is the membrane. The protein resides in the cell projection. It is found in the cilium. It localises to the photoreceptor outer segment. In terms of biological role, photoreceptor required for image-forming vision at low light intensity. Required for photoreceptor cell viability after birth. Light-induced isomerization of 11-cis to all-trans retinal triggers a conformational change that activates signaling via G-proteins. Subsequent receptor phosphorylation mediates displacement of the bound G-protein alpha subunit by arrestin and terminates signaling. This chain is Rhodopsin (RHO), found in Rana temporaria (European common frog).